Here is a 281-residue protein sequence, read N- to C-terminus: Gas vesicle protein L1 (281 aa).

It belongs to the gas vesicle GvpF/GvpL family. As to quaternary structure, may form oligomers. GvpF to GvpM interact with each other in vitro, and may form multi-subunit complex(es). Interacts with GvpC1, GvpN1 and GvpO1.

It is found in the gas vesicle. Its subcellular location is the cytoplasm. In terms of biological role, proteins GvpF to GvpM might be involved in nucleating gas vesicle formation. A minor component of the gas vesicle. This the only minor gas vesicle protein that binds all the others (including GvpC1, GvpN1 and GvpO1, but not GvpA1), suggesting it might be able to assemble them. Gas vesicles are hollow, gas filled proteinaceous nanostructures found in several microbial planktonic microorganisms. They allow positioning of halobacteria at the optimal depth for growth in the poorly aerated, shallow brine pools of their habitat. Its function is as follows. Expression of a 9.5 kb p-vac DNA fragment containing 2 divergently transcribed regions (gvpD-gvpE-gvpF-gvpG-gvpH-gvpI-gvpJ-gvpK-gvpL-gvpM and gvpA-gvpC-gvpN-gvpO) allows H.volcanii to produce gas vesicles. A minimal gas vesicle can be made in H.volcanii by gvpA1-gvpO1 plus gvpF1-gvpG1-gvpJ1-gvpK1-gvpL1-gvpM1; lack of enough GvpJ1 prevents their formation. A similar region restores gas vesicle production in H.halobium without the p-vac locus, but it still has the c-vac locus. In Halobacterium salinarum (strain ATCC 700922 / JCM 11081 / NRC-1) (Halobacterium halobium), this protein is Gas vesicle protein L1 (gvpL11).